The primary structure comprises 306 residues: Zinc finger protein 625 (306 aa).

A C2H2-type 1; degenerate zinc finger spans residues 31 to 53 (PRVKSCGEVSVGHASLNRHHRAD). 8 consecutive C2H2-type zinc fingers follow at residues 69-91 (YKCTYCKKAFSDLPYFRTHEWAH), 97-119 (YDCEECGKSFISRSSIRRHRIMH), 125-147 (YKCNFCGKALMCLSLYLIHKRTH), 153-175 (YECKQCGKAFSHSGSLRIHERTH), 181-203 (YECSECGKAFHSSTCLHAHKITH), 209-231 (YECKQCGKAFVSFNSVRYHERTH), 237-259 (YECKQCGKAFRSASHLRTHGRTH), and 265-287 (YECKQCGKAFGCASSVKIHERTH). A Phosphotyrosine modification is found at Tyr209. Residues 287–306 (HTGEKPCSSNTSKGQGEKIA) are disordered.

This sequence belongs to the krueppel C2H2-type zinc-finger protein family.

Its subcellular location is the nucleus. Functionally, may be involved in transcriptional regulation. The polypeptide is Zinc finger protein 625 (ZNF625) (Homo sapiens (Human)).